Consider the following 203-residue polypeptide: Urease accessory protein UreG (203 aa).

Residue 14–21 (GPVGSGKT) coordinates GTP.

Belongs to the SIMIBI class G3E GTPase family. UreG subfamily. Homodimer. UreD, UreF and UreG form a complex that acts as a GTP-hydrolysis-dependent molecular chaperone, activating the urease apoprotein by helping to assemble the nickel containing metallocenter of UreC. The UreE protein probably delivers the nickel.

It is found in the cytoplasm. Its function is as follows. Facilitates the functional incorporation of the urease nickel metallocenter. This process requires GTP hydrolysis, probably effectuated by UreG. This chain is Urease accessory protein UreG, found in Agrobacterium fabrum (strain C58 / ATCC 33970) (Agrobacterium tumefaciens (strain C58)).